Reading from the N-terminus, the 118-residue chain is Large ribosomal subunit protein uL24 (118 aa).

This sequence belongs to the universal ribosomal protein uL24 family. As to quaternary structure, part of the 50S ribosomal subunit.

Its function is as follows. One of two assembly initiator proteins, it binds directly to the 5'-end of the 23S rRNA, where it nucleates assembly of the 50S subunit. One of the proteins that surrounds the polypeptide exit tunnel on the outside of the subunit. The chain is Large ribosomal subunit protein uL24 from Prochlorococcus marinus (strain NATL2A).